Here is a 424-residue protein sequence, read N- to C-terminus: Alkaline nuclease (424 aa).

It belongs to the baculo-herpesviridae alkaline nuclease family. Interacts with LEF-3.

It localises to the host nucleus. Functionally, may play a role in maturation and encapsidation of viral replicated genome, by promoting DNA homologous recombination. Exhibits endonuclease and 5'-&gt;3' exonuclease activities. The endonuclease activity displays a specificity for ssDNA in vitro. The sequence is that of Alkaline nuclease (ALK-EXO) from Orgyia pseudotsugata (Douglas-fir tussock moth).